The following is a 198-amino-acid chain: Ribonuclease HII (198 aa).

Residues 11 to 198 (NLIAGVDEVG…GPVKRVLGLV (188 aa)) form the RNase H type-2 domain. A divalent metal cation-binding residues include D17, E18, and D109.

The protein belongs to the RNase HII family. The cofactor is Mn(2+). It depends on Mg(2+) as a cofactor.

It is found in the cytoplasm. The enzyme catalyses Endonucleolytic cleavage to 5'-phosphomonoester.. In terms of biological role, endonuclease that specifically degrades the RNA of RNA-DNA hybrids. This Yersinia enterocolitica serotype O:8 / biotype 1B (strain NCTC 13174 / 8081) protein is Ribonuclease HII.